The following is a 434-amino-acid chain: Probable glycine dehydrogenase (decarboxylating) subunit 1 (434 aa).

It belongs to the GcvP family. N-terminal subunit subfamily. As to quaternary structure, the glycine cleavage system is composed of four proteins: P, T, L and H. In this organism, the P 'protein' is a heterodimer of two subunits.

The enzyme catalyses N(6)-[(R)-lipoyl]-L-lysyl-[glycine-cleavage complex H protein] + glycine + H(+) = N(6)-[(R)-S(8)-aminomethyldihydrolipoyl]-L-lysyl-[glycine-cleavage complex H protein] + CO2. Its function is as follows. The glycine cleavage system catalyzes the degradation of glycine. The P protein binds the alpha-amino group of glycine through its pyridoxal phosphate cofactor; CO(2) is released and the remaining methylamine moiety is then transferred to the lipoamide cofactor of the H protein. The protein is Probable glycine dehydrogenase (decarboxylating) subunit 1 of Thermoplasma volcanium (strain ATCC 51530 / DSM 4299 / JCM 9571 / NBRC 15438 / GSS1).